We begin with the raw amino-acid sequence, 103 residues long: Small ribosomal subunit protein uS10 (103 aa).

The protein belongs to the universal ribosomal protein uS10 family. As to quaternary structure, part of the 30S ribosomal subunit.

Its function is as follows. Involved in the binding of tRNA to the ribosomes. In Chromohalobacter salexigens (strain ATCC BAA-138 / DSM 3043 / CIP 106854 / NCIMB 13768 / 1H11), this protein is Small ribosomal subunit protein uS10.